Consider the following 81-residue polypeptide: Small ribosomal subunit protein bS18 (81 aa).

The protein belongs to the bacterial ribosomal protein bS18 family. As to quaternary structure, part of the 30S ribosomal subunit. Forms a tight heterodimer with protein bS6.

Its function is as follows. Binds as a heterodimer with protein bS6 to the central domain of the 16S rRNA, where it helps stabilize the platform of the 30S subunit. This chain is Small ribosomal subunit protein bS18, found in Lactococcus lactis subsp. cremoris (strain MG1363).